A 130-amino-acid chain; its full sequence is Small ribosomal subunit protein uS8 (130 aa).

It belongs to the universal ribosomal protein uS8 family. As to quaternary structure, part of the 30S ribosomal subunit. Contacts proteins S5 and S12.

Functionally, one of the primary rRNA binding proteins, it binds directly to 16S rRNA central domain where it helps coordinate assembly of the platform of the 30S subunit. The protein is Small ribosomal subunit protein uS8 of Aliivibrio fischeri (strain MJ11) (Vibrio fischeri).